Consider the following 282-residue polypeptide: Protoheme IX farnesyltransferase (282 aa).

8 helical membrane passes run 40 to 60 (LVLASLSMFLSIAGTTGFNMV), 87 to 107 (AVLASSAALAAGLAAGVAVNP), 108 to 128 (YVFVAGLLGFLIDIAVYTVLL), 135 to 157 (SVVFGGFAGGMPALGGWAAATGG), 162 to 184 (GVLLMLLVAVWSSLHIWTLSTYY), 204 to 224 (AGVVASLAAAVAVFLVAFLAF), 228 to 248 (LISAVGFAVAAVPLVLAVAVL), and 261 to 281 (AYRAFKLVNIFMGLFFVLLVL).

The protein belongs to the UbiA prenyltransferase family. Protoheme IX farnesyltransferase subfamily.

Its subcellular location is the cell membrane. It carries out the reaction heme b + (2E,6E)-farnesyl diphosphate + H2O = Fe(II)-heme o + diphosphate. It functions in the pathway porphyrin-containing compound metabolism; heme O biosynthesis; heme O from protoheme: step 1/1. Functionally, converts heme B (protoheme IX) to heme O by substitution of the vinyl group on carbon 2 of heme B porphyrin ring with a hydroxyethyl farnesyl side group. This Thermofilum pendens (strain DSM 2475 / Hrk 5) protein is Protoheme IX farnesyltransferase.